Reading from the N-terminus, the 433-residue chain is Tol-Pal system protein TolB (433 aa).

The first 21 residues, 1–21 (MRNLLRGMLVVICCMAGIVMA), serve as a signal peptide directing secretion.

Belongs to the TolB family. As to quaternary structure, the Tol-Pal system is composed of five core proteins: the inner membrane proteins TolA, TolQ and TolR, the periplasmic protein TolB and the outer membrane protein Pal. They form a network linking the inner and outer membranes and the peptidoglycan layer.

It is found in the periplasm. Part of the Tol-Pal system, which plays a role in outer membrane invagination during cell division and is important for maintaining outer membrane integrity. This is Tol-Pal system protein TolB from Pseudomonas fluorescens (strain Pf0-1).